A 217-amino-acid polypeptide reads, in one-letter code: Sentrin-specific protease 8 (217 aa).

Methionine 1 is subject to N-acetylmethionine. The segment at 11–174 (SLLRQSDVSL…MYVICNTEAL (164 aa)) is protease. Active-site residues include histidine 102 and aspartate 119. Catalysis depends on cysteine 163, which acts as the Nucleophile.

The protein belongs to the peptidase C48 family.

Protease that catalyzes two essential functions in the NEDD8 pathway: processing of full-length NEDD8 to its mature form and deconjugation of NEDD8 from targeted proteins such as cullins or p53. The protein is Sentrin-specific protease 8 (Senp8) of Rattus norvegicus (Rat).